The following is an 819-amino-acid chain: Solute carrier organic anion transporter family member 74D (819 aa).

Residues 1 to 157 are disordered; that stretch reads MTKSNGDVEA…GSSAESSSSC (157 aa). The Cytoplasmic segment spans residues 1 to 174; sequence MTKSNGDVEA…RWARRFASTH (174 aa). 3 stretches are compositionally biased toward polar residues: residues 24 to 34, 43 to 62, and 71 to 81; these read GHGQLNGNGYH, SQAF…NGEV, and LYESTPSNNNE. Composition is skewed to low complexity over residues 91–111 and 144–157; these read LKNG…NGHS and DLNG…SSSC. The chain crosses the membrane as a helical span at residues 175–195; it reads VFMVVFLLAYILQGMYMTYFV. Topologically, residues 196–213 are extracellular; sequence SVITTIEKLFQIKSKTTG. The helical transmembrane segment at 214–234 threads the bilayer; sequence ILLSASEMGQICTAMLLTYFA. The Cytoplasmic portion of the chain corresponds to 235 to 242; sequence GRGHRPRW. Residues 243-263 form a helical membrane-spanning segment; that stretch reads IACGMVLFSIAAFSCALPHFI. Over 264 to 332 the chain is Extracellular; it reads FGEQLMHSSV…LEQASHSKIT (69 aa). 3 N-linked (GlcNAc...) asparagine glycosylation sites follow: asparagine 284, asparagine 293, and asparagine 309. Residues 333–353 traverse the membrane as a helical segment; that stretch reads VIVLCIFFGSLLSSGIGQTAV. The Cytoplasmic segment spans residues 354-373; that stretch reads ATLGIPYIDDNVGSKQSPMY. A helical transmembrane segment spans residues 374 to 394; that stretch reads MAVTIGMRILGPASGFIFGSF. The Extracellular segment spans residues 395–413; that stretch reads CTRWYVNFSNPGFDATDPR. N-linked (GlcNAc...) asparagine glycosylation occurs at asparagine 401. The helical transmembrane segment at 414-434 threads the bilayer; that stretch reads WIGAWWLGPVAIGSLMLLASI. Over 435 to 488 the chain is Cytoplasmic; that stretch reads AMFSFPKQLRGKQKPPGQTATPAAPVEPEEKPKLKDFPKTVRRQLSNDILMFRT. The disordered stretch occupies residues 444-466; that stretch reads RGKQKPPGQTATPAAPVEPEEKP. The chain crosses the membrane as a helical span at residues 489 to 509; it reads ASCVFHLLPIAGLYTFLPKYL. Residues 510 to 522 lie on the Extracellular side of the membrane; the sequence is ETQFRLATYDANM. The chain crosses the membrane as a helical span at residues 523-543; that stretch reads IAAFCGILVMGIGIVISGLFI. Residues 544-553 are Cytoplasmic-facing; sequence LKRKPTARGV. The helical transmembrane segment at 554-574 threads the bilayer; sequence AAWIAFTALVYSAGMIILMFI. Over 575–667 the chain is Extracellular; the sequence is GCSMNDFAGY…NGYCDNNCKN (93 aa). The Kazal-like domain maps to 593–651; it reads ALIEPTCSAALNCTCDKENFAPICADGKMYISACHAGCSSSSLRPSDNRTLYSDCACIP. Intrachain disulfides connect cysteine 599-cysteine 630, cysteine 607-cysteine 626, and cysteine 616-cysteine 649. N-linked (GlcNAc...) asparagine glycosylation is present at asparagine 604. Asparagine 640 carries N-linked (GlcNAc...) asparagine glycosylation. Residues 668–688 traverse the membrane as a helical segment; it reads FIYFILIFAICVFMHSTSEVG. Residues 689-707 lie on the Cytoplasmic side of the membrane; the sequence is SMLLVMRCTHPKDKAMAMG. A helical membrane pass occupies residues 708 to 728; sequence VIQSAIGLFGNVPCPIIYGAV. The Extracellular segment spans residues 729–756; sequence VDSACLIWKSVCGKHGACSLYDADTFRQ. A helical transmembrane segment spans residues 757 to 777; it reads YFLGITAGIMFLAFLMDLVVW. At 778–819 the chain is on the cytoplasmic side; sequence RKAHRIDIAPEDPQEGGPASNGRTLEVSESKQPITPAPDTTV. Positions 787-819 are disordered; the sequence is PEDPQEGGPASNGRTLEVSESKQPITPAPDTTV. Polar residues predominate over residues 807–819; it reads SKQPITPAPDTTV.

This sequence belongs to the organo anion transporter (TC 2.A.60) family.

Its subcellular location is the cell membrane. In terms of biological role, transporter that mediates the cellular uptake of ecdysteroids, including ecdysone, from the hemolymph. The sequence is that of Solute carrier organic anion transporter family member 74D from Drosophila melanogaster (Fruit fly).